The sequence spans 323 residues: Beta-ketoacyl-[acyl-carrier-protein] synthase III (323 aa).

Catalysis depends on residues Cys-112 and His-249. Positions 250–254 (QANYR) are ACP-binding. Residue Asn-279 is part of the active site.

This sequence belongs to the thiolase-like superfamily. FabH family. In terms of assembly, homodimer.

It is found in the cytoplasm. The catalysed reaction is malonyl-[ACP] + acetyl-CoA + H(+) = 3-oxobutanoyl-[ACP] + CO2 + CoA. It participates in lipid metabolism; fatty acid biosynthesis. Functionally, catalyzes the condensation reaction of fatty acid synthesis by the addition to an acyl acceptor of two carbons from malonyl-ACP. Catalyzes the first condensation reaction which initiates fatty acid synthesis and may therefore play a role in governing the total rate of fatty acid production. Possesses both acetoacetyl-ACP synthase and acetyl transacylase activities. Its substrate specificity determines the biosynthesis of branched-chain and/or straight-chain of fatty acids. This Clostridium kluyveri (strain NBRC 12016) protein is Beta-ketoacyl-[acyl-carrier-protein] synthase III.